Consider the following 431-residue polypeptide: Adenylosuccinate synthetase (431 aa).

Residues 21-27 (GDEGKGK) and 49-51 (GHT) contribute to the GTP site. Asp-22 (proton acceptor) is an active-site residue. Mg(2+)-binding residues include Asp-22 and Gly-49. Residues 22–25 (DEGK), 47–50 (NAGH), Thr-138, Arg-152, Asn-230, Thr-245, and Arg-309 contribute to the IMP site. The Proton donor role is filled by His-50. Residue 305-311 (ATTGRPR) coordinates substrate. GTP-binding positions include Arg-311, 337 to 339 (KLD), and 419 to 421 (GNG).

The protein belongs to the adenylosuccinate synthetase family. In terms of assembly, homodimer. Mg(2+) is required as a cofactor.

The protein localises to the cytoplasm. It carries out the reaction IMP + L-aspartate + GTP = N(6)-(1,2-dicarboxyethyl)-AMP + GDP + phosphate + 2 H(+). The protein operates within purine metabolism; AMP biosynthesis via de novo pathway; AMP from IMP: step 1/2. In terms of biological role, plays an important role in the de novo pathway and in the salvage pathway of purine nucleotide biosynthesis. Catalyzes the first committed step in the biosynthesis of AMP from IMP. This chain is Adenylosuccinate synthetase, found in Paramecium tetraurelia.